We begin with the raw amino-acid sequence, 276 residues long: Putative pyruvate, phosphate dikinase regulatory protein (276 aa).

150-157 (GVSRTSKT) contacts ADP.

Belongs to the pyruvate, phosphate/water dikinase regulatory protein family. PDRP subfamily.

It carries out the reaction N(tele)-phospho-L-histidyl/L-threonyl-[pyruvate, phosphate dikinase] + ADP = N(tele)-phospho-L-histidyl/O-phospho-L-threonyl-[pyruvate, phosphate dikinase] + AMP + H(+). It catalyses the reaction N(tele)-phospho-L-histidyl/O-phospho-L-threonyl-[pyruvate, phosphate dikinase] + phosphate + H(+) = N(tele)-phospho-L-histidyl/L-threonyl-[pyruvate, phosphate dikinase] + diphosphate. Functionally, bifunctional serine/threonine kinase and phosphorylase involved in the regulation of the pyruvate, phosphate dikinase (PPDK) by catalyzing its phosphorylation/dephosphorylation. The protein is Putative pyruvate, phosphate dikinase regulatory protein of Lacticaseibacillus casei (strain BL23) (Lactobacillus casei).